Consider the following 196-residue polypeptide: Holliday junction branch migration complex subunit RuvA (196 aa).

Positions 1 to 62 are domain I; that stretch reads MYEYINGLIT…ENEMTLYGFI (62 aa). The interval 63-141 is domain II; that stretch reads DENEKYLFNK…DLALSAGMTV (79 aa). Residues 142–146 are flexible linker; the sequence is ETVPT. The domain III stretch occupies residues 147 to 196; the sequence is TDNQALADALAALESLGYSAKDVAKLQTVLANQKDTTDGYIRSALKFLVK.

It belongs to the RuvA family. In terms of assembly, homotetramer. Forms an RuvA(8)-RuvB(12)-Holliday junction (HJ) complex. HJ DNA is sandwiched between 2 RuvA tetramers; dsDNA enters through RuvA and exits via RuvB. An RuvB hexamer assembles on each DNA strand where it exits the tetramer. Each RuvB hexamer is contacted by two RuvA subunits (via domain III) on 2 adjacent RuvB subunits; this complex drives branch migration. In the full resolvosome a probable DNA-RuvA(4)-RuvB(12)-RuvC(2) complex forms which resolves the HJ.

The protein resides in the cytoplasm. In terms of biological role, the RuvA-RuvB-RuvC complex processes Holliday junction (HJ) DNA during genetic recombination and DNA repair, while the RuvA-RuvB complex plays an important role in the rescue of blocked DNA replication forks via replication fork reversal (RFR). RuvA specifically binds to HJ cruciform DNA, conferring on it an open structure. The RuvB hexamer acts as an ATP-dependent pump, pulling dsDNA into and through the RuvAB complex. HJ branch migration allows RuvC to scan DNA until it finds its consensus sequence, where it cleaves and resolves the cruciform DNA. The polypeptide is Holliday junction branch migration complex subunit RuvA (Leuconostoc citreum (strain KM20)).